The sequence spans 203 residues: Inositol diphosphatase DSP3 (203 aa).

The 150-residue stretch at 20–169 folds into the Tyrosine-protein phosphatase domain; it reads NFSMVEDGIY…FDIVSLRQCL (150 aa). Positions 76–88 are WPD loop important for active site topology; it reads FGIEGKTDPPTPM. The Phosphocysteine intermediate role is filled by Cys112.

Belongs to the protein-tyrosine phosphatase family. Atypical dual-specificity phosphatase Siw14-like subfamily. Interacts with FLZ1. In terms of tissue distribution, highly expressed in roots, stems and flowers. Expressed at low levels in leaves and siliques.

It is found in the nucleus. The catalysed reaction is 5-diphospho-1D-myo-inositol 1,2,3,4,6-pentakisphosphate + H2O = 1D-myo-inositol hexakisphosphate + phosphate + H(+). It catalyses the reaction 1,5-bis(diphospho)-1D-myo-inositol 2,3,4,6-tetrakisphosphate + H2O = 1-diphospho-1D-myo-inositol 2,3,4,5,6-pentakisphosphate + phosphate + 2 H(+). The enzyme catalyses 3,5-bis(diphospho)-1D-myo-inositol 1,2,4,6-tetrakisphosphate + H2O = 3-diphospho-1D-myo-inositol 1,2,4,5,6-pentakisphosphate + phosphate + 2 H(+). It carries out the reaction 6-diphospho-1D-myo-inositol pentakisphosphate + H2O = 1D-myo-inositol hexakisphosphate + phosphate + H(+). Its function is as follows. Cleaves the beta-phosphate at the 5-position of soluble inositol pyrophosphates. Has highest activity on 5-diphosphoinositol 1,2,3,4,6-pentakisphosphate (5-InsP(7)), 1,5-bis-diphosphoinositol 2,3,4,6-tetrakisphosphate (1,5-InsP(8)) and 3,5-InsP(8). Possesses phosphotyrosine phosphatase activity in vitro. Dephosphorylates the phosphoinositides PI(3,5)P2. Hydrolyzes para-nitrophenyl phosphate and O-methylfluorescein phosphate in vitro. The protein is Inositol diphosphatase DSP3 of Arabidopsis thaliana (Mouse-ear cress).